A 332-amino-acid polypeptide reads, in one-letter code: Glycerol-3-phosphate dehydrogenase [NAD(P)+] (332 aa).

NADPH contacts are provided by Ser10, Trp11, Lys31, and Lys105. Residues Lys105, Gly136, and Ser138 each coordinate sn-glycerol 3-phosphate. Ala140 serves as a coordination point for NADPH. Sn-glycerol 3-phosphate is bound by residues Lys191, Asp244, Ser254, Arg255, and Asn256. Lys191 functions as the Proton acceptor in the catalytic mechanism. Arg255 contacts NADPH. NADPH contacts are provided by Val279 and Glu281.

It belongs to the NAD-dependent glycerol-3-phosphate dehydrogenase family.

It localises to the cytoplasm. It catalyses the reaction sn-glycerol 3-phosphate + NAD(+) = dihydroxyacetone phosphate + NADH + H(+). The enzyme catalyses sn-glycerol 3-phosphate + NADP(+) = dihydroxyacetone phosphate + NADPH + H(+). Its pathway is membrane lipid metabolism; glycerophospholipid metabolism. Its function is as follows. Catalyzes the reduction of the glycolytic intermediate dihydroxyacetone phosphate (DHAP) to sn-glycerol 3-phosphate (G3P), the key precursor for phospholipid synthesis. This Anaeromyxobacter dehalogenans (strain 2CP-C) protein is Glycerol-3-phosphate dehydrogenase [NAD(P)+].